We begin with the raw amino-acid sequence, 1149 residues long: DNA-directed RNA polymerase III subunit RPC2 (1149 aa).

Zn(2+) is bound by residues cysteine 1095, cysteine 1098, cysteine 1107, and cysteine 1110. The C4-type zinc-finger motif lies at cysteine 1095–cysteine 1110.

This sequence belongs to the RNA polymerase beta chain family. In terms of assembly, component of the RNA polymerase III (Pol III) complex consisting of 17 subunits.

The protein localises to the nucleus. The catalysed reaction is RNA(n) + a ribonucleoside 5'-triphosphate = RNA(n+1) + diphosphate. DNA-dependent RNA polymerase catalyzes the transcription of DNA into RNA using the four ribonucleoside triphosphates as substrates. Second largest core component of RNA polymerase III which synthesizes small RNAs, such as 5S rRNA and tRNAs. Proposed to contribute to the polymerase catalytic activity and forms the polymerase active center together with the largest subunit. Pol III is composed of mobile elements and RPC2 is part of the core element with the central large cleft and probably a clamp element that moves to open and close the cleft. The chain is DNA-directed RNA polymerase III subunit RPC2 (RET1) from Saccharomyces cerevisiae (strain ATCC 204508 / S288c) (Baker's yeast).